We begin with the raw amino-acid sequence, 1707 residues long: Histone-lysine N-methyltransferase SETD1A (1707 aa).

The segment at 60–89 (LQDPRCHVRSKNRDFSLPVPKFKLDEFYIG) is interaction with WDR82. The RRM domain occupies 84 to 172 (DEFYIGQIPL…NIIHAQLDIK (89 aa)). 7 disordered regions span residues 194–308 (PTGG…YQDA), 331–363 (TAAT…RSSD), 381–486 (SYPP…AQHS), 506–655 (LASD…PPPH), 834–854 (AKPF…EKTK), 891–1251 (PSFK…GTEV), and 1264–1293 (ARRG…RPLL). The segment covering 239–277 (NGTPCSQDTSFSSSRQDTPSSFGQFTPQSSQGTPYTSRG) has biased composition (polar residues). 2 stretches are compositionally biased toward low complexity: residues 278-295 (STPY…TSTS) and 331-357 (TAAT…SSSS). Positions 430-440 (SEAPPPEPPEP) are enriched in pro residues. 2 positions are modified to phosphoserine: serine 459 and serine 464. Positions 459 to 473 (SPRPASPARSGSPAP) are enriched in low complexity. Over residues 474–486 (ETTNESVPFAQHS) the composition is skewed to polar residues. Phosphoserine occurs at positions 508 and 565. Residues 568 to 578 (ANGQNQASPCS) show a composition bias toward polar residues. Composition is skewed to pro residues over residues 593–617 (SPPP…PPPY) and 624–655 (GYPP…PPPH). Over residues 844–854 (QAKEEDKEKTK) the composition is skewed to basic and acidic residues. Phosphoserine is present on serine 915. Composition is skewed to acidic residues over residues 918-927 (AEEDEDDPEQ) and 976-992 (KDEE…DREE). Basic and acidic residues predominate over residues 993–1002 (AVDTTKKETE). Acidic residues predominate over residues 1003-1012 (VSDGEDEESD). Over residues 1032 to 1060 (DSESSSSSSSSSSSSSSSSSSSSSSSSES) the composition is skewed to low complexity. Positions 1077–1094 (ASPPPREVPVPTPAPVEV) are enriched in pro residues. At serine 1103 the chain carries Phosphoserine. Residues 1127-1145 (PSAPLRPPEPPAGPPAPAP) are compositionally biased toward pro residues. A compositionally biased stretch (acidic residues) spans 1275 to 1284 (EDSEATETSD). Positions 1299–1303 (EHNYA) match the HCFC1-binding motif (HBM) motif. Disordered stretches follow at residues 1307–1417 (KPTP…AYEP) and 1472–1499 (NLTT…SEGY). The segment covering 1308–1323 (PTPPAPALRPPEPVPA) has biased composition (pro residues). Positions 1360–1377 (EGEEEGEEEGEEEEEESS) are enriched in acidic residues. Basic residues predominate over residues 1390–1403 (RRRSLRSHARRRRP). Over residues 1404–1414 (PPPPPPPPPRA) the composition is skewed to pro residues. The segment at 1415–1450 (YEPRSEFEQMTILYDIWNSGLDSEDMSYLRLTYERL) is interaction with CFP1. The segment at 1450 to 1537 (LLQQTSGADW…GTNRVLSERR (88 aa)) is interaction with ASH2L, RBBP5 and WDR5. Residues 1492–1497 (GSARSE) carry the WDR5 interaction motif (WIN) motif. The RxxxRR motif signature appears at 1537-1542 (RSEQRR). Positions 1568-1685 (KKLRFGRSRI…VDEEITYDYK (118 aa)) constitute an SET domain. Tyrosine 1684 is a binding site for S-adenosyl-L-methionine. The 17-residue stretch at 1691–1707 (NKIPCLCGTESCRGSLN) folds into the Post-SET domain.

Belongs to the class V-like SAM-binding methyltransferase superfamily. Component of the SET1A/COMPASS complex composed of the catalytic subunit SETD1A, WDR5, WDR82, RBBP5, ASH2L/ASH2, CXXC1/CFP1, HCFC1 and DPY30 homotrimer. Forms a core complex with the evolutionary conserved subcomplex WRAD composed of WDR5, RBBP5, ASH2L/ASH2 and DPY30 subunits; WRAD differentially stimulates the methyltransferase activity. Interacts with BOD1L1 (via COMPASS-Shg1 domain) at replication forks. Interacts with HCFC1. Interacts with ASH2/ASH2L. Interacts with CXXC1/CFP1. Interacts with RBBP5. Interacts (via N-terminal region) with WDR82; the interaction is direct. Interacts (via the RRM domain) with hyperphosphorylated C-terminal domain (CTD) of RNA polymerase II large subunit (POLR2A) only in the presence of WDR82. Binds specifically to CTD heptad repeats phosphorylated on 'Ser-5' of each heptad. Interacts with ZNF335. Interacts with SUPT6H. Interacts with NAP1L1. Interacts (via WIN motif) with WDR5.

The protein resides in the nucleus speckle. Its subcellular location is the chromosome. It is found in the cytoplasm. It catalyses the reaction L-lysyl(4)-[histone H3] + S-adenosyl-L-methionine = N(6)-methyl-L-lysyl(4)-[histone H3] + S-adenosyl-L-homocysteine + H(+). It carries out the reaction N(6)-methyl-L-lysyl(4)-[histone H3] + S-adenosyl-L-methionine = N(6),N(6)-dimethyl-L-lysyl(4)-[histone H3] + S-adenosyl-L-homocysteine + H(+). The enzyme catalyses N(6),N(6)-dimethyl-L-lysyl(4)-[histone H3] + S-adenosyl-L-methionine = N(6),N(6),N(6)-trimethyl-L-lysyl(4)-[histone H3] + S-adenosyl-L-homocysteine + H(+). In terms of biological role, histone methyltransferase that catalyzes methyl group transfer from S-adenosyl-L-methionine to the epsilon-amino group of 'Lys-4' of histone H3 (H3K4) via a non-processive mechanism. Part of chromatin remodeling machinery, forms H3K4me1, H3K4me2 and H3K4me3 methylation marks at active chromatin sites where transcription and DNA repair take place. Responsible for H3K4me3 enriched promoters and transcriptional programming of inner mass stem cells and neuron progenitors during embryogenesis. Required for H3K4me1 mark at stalled replication forks. Mediates FANCD2-dependent nucleosome remodeling and RAD51 nucleofilaments stabilization at reversed forks, protecting them from nucleolytic degradation. Does not methylate 'Lys-4' of histone H3 if the neighboring 'Lys-9' residue is already methylated. Binds RNAs involved in RNA processing and the DNA damage response. This chain is Histone-lysine N-methyltransferase SETD1A (SETD1A), found in Homo sapiens (Human).